We begin with the raw amino-acid sequence, 575 residues long: MAQISESAAIPRRTANHHGNVWDDDLILSLDSPYGAPAYYERVANLIEEMKHLLLREMEDSNHDLIRRLQIVDTLECLGIDRHFQHEIKTAALDYVYRCWNEKGIGMGSSDSGSKDLDATALGLRALRLHRYNVSSGVLENFKDENGKFFCNLTGDKRVRSMLSLLRASEISFPGEKVMQEAKAFTREYLTQVLAGRGDVTDVDQSLLREVKYALEFPWHWSVPRWEARSFIEIYGQNHSWLKSNINQKVLELAKLDFNILQCIHQKEIQFIVRWWRESEIAQLNFYRKRHVEFYFWVVICIFEPEFSQSRIAFAKICTVATVLDDLYDTHGMLDELKTVTEGVSRWDLPLIDDLPDNIKIAFQFFFNTANELAVEVVKKQGRDMIALLKANWQRYVESYLQEAEWIATRHVPSFDEYIKNARASSGMCIGNLIPLLLLGQLLANNIVEQIHSPSKIQELSELTIRLIDDIRDFEDEKERGEIASAIECYMKDNPDSTVENALNHLEGILHLSLEELNWEFIKQDTVPLCCKKFTFNIVRGLQFVYKYGDGLSISNKEVKDQIFKILIDQVPIEE.

(2E,6E)-farnesyl diphosphate-binding residues include Arg288, Asp325, Asp329, Arg466, and Asp469. Residues Asp325 and Asp329 each contribute to the Mg(2+) site. The short motif at 325–329 (DDLYD) is the DDXXD motif element. Mg(2+) contacts are provided by Asp469 and Glu477.

This sequence belongs to the terpene synthase family. Tpsb subfamily. As to quaternary structure, monomer. It depends on Mg(2+) as a cofactor. Mn(2+) is required as a cofactor.

The protein resides in the plastid. It localises to the chloroplast. The catalysed reaction is (2E,6E)-farnesyl diphosphate = (+)-delta-selinene + diphosphate. Its pathway is secondary metabolite biosynthesis; terpenoid biosynthesis. It participates in terpene metabolism; oleoresin biosynthesis. Sesquiterpene synthase (sesqui-TPS) involved in the biosynthesis of sesquiterpene natural products. Catalyzes the conversion of (2E)-geranyl diphosphate (GPP) into delta-selinene. The chain is Delta-selinene-like synthase, chloroplastic from Picea sitchensis (Sitka spruce).